Here is a 544-residue protein sequence, read N- to C-terminus: Chaperonin GroEL (544 aa).

Residues Thr-29–Pro-32, Lys-50, Asp-86–Thr-90, Gly-414, Asn-477–Ala-479, and Asp-493 each bind ATP. The segment at Asp-525–Met-544 is disordered.

Belongs to the chaperonin (HSP60) family. Forms a cylinder of 14 subunits composed of two heptameric rings stacked back-to-back. Interacts with the co-chaperonin GroES.

It is found in the cytoplasm. It catalyses the reaction ATP + H2O + a folded polypeptide = ADP + phosphate + an unfolded polypeptide.. In terms of biological role, together with its co-chaperonin GroES, plays an essential role in assisting protein folding. The GroEL-GroES system forms a nano-cage that allows encapsulation of the non-native substrate proteins and provides a physical environment optimized to promote and accelerate protein folding. This is Chaperonin GroEL from Aliarcobacter butzleri (strain RM4018) (Arcobacter butzleri).